The sequence spans 273 residues: 2-dehydro-3-deoxyphosphooctonate aldolase (273 aa).

This sequence belongs to the KdsA family.

It is found in the cytoplasm. It catalyses the reaction D-arabinose 5-phosphate + phosphoenolpyruvate + H2O = 3-deoxy-alpha-D-manno-2-octulosonate-8-phosphate + phosphate. Its pathway is carbohydrate biosynthesis; 3-deoxy-D-manno-octulosonate biosynthesis; 3-deoxy-D-manno-octulosonate from D-ribulose 5-phosphate: step 2/3. It functions in the pathway bacterial outer membrane biogenesis; lipopolysaccharide biosynthesis. This is 2-dehydro-3-deoxyphosphooctonate aldolase from Desulfatibacillum aliphaticivorans.